Here is a 371-residue protein sequence, read N- to C-terminus: tRNA-specific 2-thiouridylase MnmA (371 aa).

Residues 13–20 (GMSGGVDS) and Met39 contribute to the ATP site. Positions 99 to 101 (NPD) are interaction with target base in tRNA. Cys104 acts as the Nucleophile in catalysis. A disulfide bridge links Cys104 with Cys200. ATP is bound at residue Gly128. The segment at 150-152 (KDQ) is interaction with tRNA. The Cysteine persulfide intermediate role is filled by Cys200. The segment at 308–309 (RY) is interaction with tRNA.

Belongs to the MnmA/TRMU family.

Its subcellular location is the cytoplasm. It catalyses the reaction S-sulfanyl-L-cysteinyl-[protein] + uridine(34) in tRNA + AH2 + ATP = 2-thiouridine(34) in tRNA + L-cysteinyl-[protein] + A + AMP + diphosphate + H(+). Its function is as follows. Catalyzes the 2-thiolation of uridine at the wobble position (U34) of tRNA, leading to the formation of s(2)U34. In Listeria innocua serovar 6a (strain ATCC BAA-680 / CLIP 11262), this protein is tRNA-specific 2-thiouridylase MnmA.